A 699-amino-acid polypeptide reads, in one-letter code: Elongation factor G 2 (699 aa).

In terms of domain architecture, tr-type G spans 8 to 290 (ERYRNIGICA…AVIEYLPSPT (283 aa)). Residues 17–24 (AHVDAGKT), 88–92 (DTPGH), and 142–145 (NKMD) each bind GTP.

It belongs to the TRAFAC class translation factor GTPase superfamily. Classic translation factor GTPase family. EF-G/EF-2 subfamily.

Its subcellular location is the cytoplasm. Catalyzes the GTP-dependent ribosomal translocation step during translation elongation. During this step, the ribosome changes from the pre-translocational (PRE) to the post-translocational (POST) state as the newly formed A-site-bound peptidyl-tRNA and P-site-bound deacylated tRNA move to the P and E sites, respectively. Catalyzes the coordinated movement of the two tRNA molecules, the mRNA and conformational changes in the ribosome. The chain is Elongation factor G 2 from Colwellia psychrerythraea (strain 34H / ATCC BAA-681) (Vibrio psychroerythus).